A 338-amino-acid polypeptide reads, in one-letter code: Tryptophan--tRNA ligase (338 aa).

ATP contacts are provided by residues 18 to 20 (QPS) and 26 to 27 (GN). The short motif at 19–27 (PSGNLTIGN) is the 'HIGH' region element. Aspartate 142 contributes to the L-tryptophan binding site. ATP is bound by residues 154–156 (GND), isoleucine 193, and 202–206 (KMSKS). The 'KMSKS' region motif lies at 202-206 (KMSKS).

It belongs to the class-I aminoacyl-tRNA synthetase family. As to quaternary structure, homodimer.

Its subcellular location is the cytoplasm. It carries out the reaction tRNA(Trp) + L-tryptophan + ATP = L-tryptophyl-tRNA(Trp) + AMP + diphosphate + H(+). Catalyzes the attachment of tryptophan to tRNA(Trp). The protein is Tryptophan--tRNA ligase of Clostridium tetani (strain Massachusetts / E88).